A 491-amino-acid polypeptide reads, in one-letter code: V-type proton ATPase subunit B 1 (491 aa).

An ATP-binding site is contributed by arginine 380.

The protein belongs to the ATPase alpha/beta chains family. In terms of assembly, V-ATPase is a heteromultimeric enzyme made up of two complexes: the ATP-hydrolytic V1 complex and the proton translocation V0 complex. The V1 complex consists of three catalytic AB heterodimers that form a heterohexamer, three peripheral stalks each consisting of EG heterodimers, one central rotor including subunits D and F, and the regulatory subunits C and H. The proton translocation complex V0 consists of the proton transport subunit a, a ring of proteolipid subunits c9c'', rotary subunit d, subunits e and f, and the accessory subunits vah-19/Ac45 and vah-20/PRR. Expressed ubiquitously. Highly expressed in the H-shaped excretory cell, the excretory pore, the intestine, and hypodermal cells. Expressed in the nervous system. Expressed at low levels in muscles.

Functionally, non-catalytic subunit of the V1 complex of vacuolar(H+)-ATPase (V-ATPase), a multisubunit enzyme composed of a peripheral complex (V1) that hydrolyzes ATP and a membrane integral complex (V0) that translocates protons. V-ATPase is responsible for acidifying and maintaining the pH of intracellular compartments and in some cell types, is targeted to the plasma membrane, where it is responsible for acidifying the extracellular environment. Essential for the proper assembly and activity of V-ATPase. Required maternally for early embryogenesis and zygotically during morphogenesis. Specifically, involved in the clearance of apoptotic cell corpses in embryos. Also, during embryonic development, the V-ATPase is required to repress fusion of epidermal cells probably by negatively regulating eff-1-mediated cell fusion. In neurons, required for necrotic cell death by promoting intracellular acidification. Required for cell death induced by hypoxia. Required for acidification of synaptic vesicles and the release of neurotransmitters from adult neurons. The polypeptide is V-type proton ATPase subunit B 1 (Caenorhabditis elegans).